The sequence spans 123 residues: Small ribosomal subunit protein uS12 (123 aa).

The tract at residues Met-1–Lys-30 is disordered. The segment covering Arg-9–Ser-21 has biased composition (basic residues). Asp-89 is subject to 3-methylthioaspartic acid.

The protein belongs to the universal ribosomal protein uS12 family. Part of the 30S ribosomal subunit. Contacts proteins S8 and S17. May interact with IF1 in the 30S initiation complex.

Functionally, with S4 and S5 plays an important role in translational accuracy. Interacts with and stabilizes bases of the 16S rRNA that are involved in tRNA selection in the A site and with the mRNA backbone. Located at the interface of the 30S and 50S subunits, it traverses the body of the 30S subunit contacting proteins on the other side and probably holding the rRNA structure together. The combined cluster of proteins S8, S12 and S17 appears to hold together the shoulder and platform of the 30S subunit. This Paracoccus denitrificans (strain Pd 1222) protein is Small ribosomal subunit protein uS12.